The following is a 354-amino-acid chain: Selenide, water dikinase (354 aa).

Cys23 is a catalytic residue. ATP is bound by residues Lys26 and 54–56 (TSD). Asp57 lines the Mg(2+) pocket. ATP-binding positions include Asp74, Asp97, and 145 to 147 (GHS). Asp97 lines the Mg(2+) pocket. Position 233 (Asp233) interacts with Mg(2+).

This sequence belongs to the selenophosphate synthase 1 family. Class I subfamily. As to quaternary structure, homodimer. Requires Mg(2+) as cofactor.

It carries out the reaction hydrogenselenide + ATP + H2O = selenophosphate + AMP + phosphate + 2 H(+). Functionally, synthesizes selenophosphate from selenide and ATP. In Burkholderia orbicola (strain MC0-3), this protein is Selenide, water dikinase.